Reading from the N-terminus, the 358-residue chain is MFDKLDQLEEKYEELSRLISDPEVIADTQRWQGYVKAHAEIEEIVQVYREYKKTVKEIEDAERMLDEKLDPDFRELVQSELHDLKERREELEAKLKILLLPKDPNDEKNVIMEIRAGAGGEEAALFAGDLFRMYSKYADRMGWKVEIMDSHPTDLGGFKEVIFTIEGKGVYSRMKFESGVHRVQRVPTTESGGRIHTSTATVAVLPEAEEVEVEINPNDLRIDVFCASGAGGQHVNKTESAVRITHIPTGIVVTCQDEKSQHKNKERAMKILRARLLDKARQEQEAELASARKSQVGTGDRSERIRTYNFPQNRVTDHRIGLTLHRLDAVLEGDLDEIIDALITTDQAERLKQVDGNA.

An N5-methylglutamine modification is found at glutamine 233. The interval 286–309 is disordered; that stretch reads AELASARKSQVGTGDRSERIRTYN.

This sequence belongs to the prokaryotic/mitochondrial release factor family. Post-translationally, methylated by PrmC. Methylation increases the termination efficiency of RF1.

It localises to the cytoplasm. In terms of biological role, peptide chain release factor 1 directs the termination of translation in response to the peptide chain termination codons UAG and UAA. This Carboxydothermus hydrogenoformans (strain ATCC BAA-161 / DSM 6008 / Z-2901) protein is Peptide chain release factor 1.